A 359-amino-acid chain; its full sequence is Nicotinate-nucleotide--dimethylbenzimidazole phosphoribosyltransferase (359 aa).

E318 serves as the catalytic Proton acceptor.

This sequence belongs to the CobT family. As to quaternary structure, homodimer.

The catalysed reaction is 5,6-dimethylbenzimidazole + nicotinate beta-D-ribonucleotide = alpha-ribazole 5'-phosphate + nicotinate + H(+). The protein operates within nucleoside biosynthesis; alpha-ribazole biosynthesis; alpha-ribazole from 5,6-dimethylbenzimidazole: step 1/2. In terms of biological role, catalyzes the synthesis of alpha-ribazole-5'-phosphate from nicotinate mononucleotide (NAMN) and 5,6-dimethylbenzimidazole (DMB). The sequence is that of Nicotinate-nucleotide--dimethylbenzimidazole phosphoribosyltransferase from Shigella flexneri serotype 5b (strain 8401).